The sequence spans 604 residues: Glutamine--fructose-6-phosphate aminotransferase [isomerizing] (604 aa).

Catalysis depends on Cys2, which acts as the Nucleophile; for GATase activity. The Glutamine amidotransferase type-2 domain occupies Cys2–Gln219. SIS domains are found at residues Leu279–Ala427 and Leu454–Pro594. Lys599 functions as the For Fru-6P isomerization activity in the catalytic mechanism.

In terms of assembly, homodimer.

Its subcellular location is the cytoplasm. It catalyses the reaction D-fructose 6-phosphate + L-glutamine = D-glucosamine 6-phosphate + L-glutamate. Its function is as follows. Catalyzes the first step in hexosamine metabolism, converting fructose-6P into glucosamine-6P using glutamine as a nitrogen source. The protein is Glutamine--fructose-6-phosphate aminotransferase [isomerizing] of Legionella pneumophila (strain Lens).